We begin with the raw amino-acid sequence, 92 residues long: uncharacterized protein (92 aa).

A disordered region spans residues 1-92; the sequence is MSDAAAPAQA…PSPSQQQVAA (92 aa).

This is an uncharacterized protein from Caenorhabditis elegans.